The following is a 417-amino-acid chain: Putative nickel insertion protein (417 aa).

The disordered stretch occupies residues 69-99; that stretch reads HEHHHDHGHHHHGHGHHHDHTHDHHHHHEHR. Over residues 74 to 99 the composition is skewed to basic residues; it reads DHGHHHHGHGHHHDHTHDHHHHHEHR.

The protein belongs to the LarC family.

This is Putative nickel insertion protein from Maridesulfovibrio salexigens (strain ATCC 14822 / DSM 2638 / NCIMB 8403 / VKM B-1763) (Desulfovibrio salexigens).